The primary structure comprises 429 residues: Glutamate-1-semialdehyde 2,1-aminomutase 1 (429 aa).

Lys268 bears the N6-(pyridoxal phosphate)lysine mark.

Belongs to the class-III pyridoxal-phosphate-dependent aminotransferase family. HemL subfamily. Homodimer. Requires pyridoxal 5'-phosphate as cofactor.

The protein localises to the cytoplasm. The enzyme catalyses (S)-4-amino-5-oxopentanoate = 5-aminolevulinate. It participates in porphyrin-containing compound metabolism; protoporphyrin-IX biosynthesis; 5-aminolevulinate from L-glutamyl-tRNA(Glu): step 2/2. This is Glutamate-1-semialdehyde 2,1-aminomutase 1 from Listeria monocytogenes serotype 4b (strain F2365).